Consider the following 349-residue polypeptide: CCN family member 2 (349 aa).

Positions 1–26 (MSATGLGPVRCAFVLLLALCSRPASS) are cleaved as a signal peptide. An IGFBP N-terminal domain is found at 27-98 (QDCSAPCQCP…NRKIGVCTAK (72 aa)). 6 disulfide bridges follow: Cys-29–Cys-54, Cys-33–Cys-56, Cys-35–Cys-57, Cys-43–Cys-60, Cys-68–Cys-82, and Cys-74–Cys-95. A VWFC domain is found at 101-167 (APCVFGGTVY…GKCCEEWVCD (67 aa)). The 46-residue stretch at 198 to 243 (NCLVQTTEWSACSKTCGMGISTRVTNDNAFCRLEKQSRLCMVRPCE) folds into the TSP type-1 domain. The tract at residues 247 to 349 (EENIKKGKKC…YYRKMYGDMA (103 aa)) is heparin-binding. Disulfide bonds link Cys-256–Cys-293, Cys-273–Cys-307, Cys-284–Cys-323, Cys-287–Cys-325, and Cys-292–Cys-329. One can recognise a CTCK domain in the interval 256–330 (CIRTPKISKP…KTCACHYNCP (75 aa)).

The protein belongs to the CCN family. In terms of assembly, monomer. Interacts with TSKU.

The protein resides in the secreted. It is found in the extracellular space. Its subcellular location is the extracellular matrix. In terms of biological role, major connective tissue mitoattractant secreted by vascular endothelial cells. Promotes proliferation and differentiation of chondrocytes. Is involved in the stimulation of osteoblast differentiation and has a critical role in osteogenesis. Mediates heparin- and divalent cation-dependent cell adhesion in many cell types including fibroblasts, myofibroblasts, endothelial and epithelial cells. Enhances fibroblast growth factor-induced DNA synthesis. This Bos taurus (Bovine) protein is CCN family member 2 (CCN2).